Reading from the N-terminus, the 376-residue chain is Histidinol-phosphate aminotransferase 1 (376 aa).

At Lys235 the chain carries N6-(pyridoxal phosphate)lysine.

The protein belongs to the class-II pyridoxal-phosphate-dependent aminotransferase family. Histidinol-phosphate aminotransferase subfamily. As to quaternary structure, homodimer. The cofactor is pyridoxal 5'-phosphate.

The catalysed reaction is L-histidinol phosphate + 2-oxoglutarate = 3-(imidazol-4-yl)-2-oxopropyl phosphate + L-glutamate. Its pathway is amino-acid biosynthesis; L-histidine biosynthesis; L-histidine from 5-phospho-alpha-D-ribose 1-diphosphate: step 7/9. In Cupriavidus pinatubonensis (strain JMP 134 / LMG 1197) (Cupriavidus necator (strain JMP 134)), this protein is Histidinol-phosphate aminotransferase 1.